Consider the following 337-residue polypeptide: Phenylalanine--tRNA ligase alpha subunit (337 aa).

Glu252 lines the Mg(2+) pocket.

The protein belongs to the class-II aminoacyl-tRNA synthetase family. Phe-tRNA synthetase alpha subunit type 1 subfamily. In terms of assembly, tetramer of two alpha and two beta subunits. Mg(2+) is required as a cofactor.

It localises to the cytoplasm. It catalyses the reaction tRNA(Phe) + L-phenylalanine + ATP = L-phenylalanyl-tRNA(Phe) + AMP + diphosphate + H(+). This chain is Phenylalanine--tRNA ligase alpha subunit, found in Francisella philomiragia subsp. philomiragia (strain ATCC 25017 / CCUG 19701 / FSC 153 / O#319-036).